A 382-amino-acid chain; its full sequence is Chaperone protein DnaJ (382 aa).

Residues 5–70 (DYYDLLGLSK…DKRAAYDRYG (66 aa)) enclose the J domain. A CR-type zinc finger spans residues 138–216 (GTKVPINYVT…CSGSGRVRDE (79 aa)). Residues Cys151, Cys154, Cys168, Cys171, Cys190, Cys193, Cys204, and Cys207 each contribute to the Zn(2+) site. CXXCXGXG motif repeat units follow at residues 151–158 (CSSCSGSG), 168–175 (CNTCHGAG), 190–197 (CHVCNGEG), and 204–211 (CKKCSGSG).

The protein belongs to the DnaJ family. Homodimer. Zn(2+) is required as a cofactor.

It localises to the cytoplasm. Its function is as follows. Participates actively in the response to hyperosmotic and heat shock by preventing the aggregation of stress-denatured proteins and by disaggregating proteins, also in an autonomous, DnaK-independent fashion. Unfolded proteins bind initially to DnaJ; upon interaction with the DnaJ-bound protein, DnaK hydrolyzes its bound ATP, resulting in the formation of a stable complex. GrpE releases ADP from DnaK; ATP binding to DnaK triggers the release of the substrate protein, thus completing the reaction cycle. Several rounds of ATP-dependent interactions between DnaJ, DnaK and GrpE are required for fully efficient folding. Also involved, together with DnaK and GrpE, in the DNA replication of plasmids through activation of initiation proteins. This is Chaperone protein DnaJ from Ehrlichia ruminantium (strain Welgevonden).